We begin with the raw amino-acid sequence, 572 residues long: Outer spore wall assembly protein SHE10 (572 aa).

Residues 1 to 19 form the signal peptide; that stretch reads MRAISKLFVFTVLVLGSLQ. 2 coiled-coil regions span residues 351–372 and 485–510; these read SQANDELANITNHIRAELREVV and FQEREKNDRLREQHEQEAREMTLREQ. Positions 539–572 are disordered; sequence STSWSVPPADARAEPASGSPIQQAASEAAQQPSV. Residues 560 to 572 are compositionally biased toward low complexity; that stretch reads QQAASEAAQQPSV.

This sequence belongs to the SHE10 family. In terms of assembly, component of the mitochondria-localized RNase mitochondrial RNA-processing (RNase MRP) composed of one single RNA encoded by the NME1 gene and at least 31 proteins. Absent in the nucleus-localized RNase MRP (NuMRP).

The protein localises to the mitochondrion. Involved in spore wall assembly. May be a component of the mitochondrial RNase MRP (MtMRP), a ribonucleoprotein endoribonuclease involved in the cleaving RNA transcripts to generate primers for DNA replication in mitochondria. In Eremothecium gossypii (strain ATCC 10895 / CBS 109.51 / FGSC 9923 / NRRL Y-1056) (Yeast), this protein is Outer spore wall assembly protein SHE10.